The primary structure comprises 396 residues: MTAVQQITVLGATGSIGLSTLDVIARHPDRYQVFALTGFTRLAELLALCVKHEPRFAVVPEAAAASRLQQDLRGAGLATQVLVGEQGLCEVASAPEVDAVMAAIVGAAGLRPTLAAVEAGKKILLANKEALVMSGALFMQAVGKSGSVLLPIDSEHNAIFQCMPADFSRGLSRVGVRRILLTASGGPFRQTPLEELEHVSPEQACAHPNWSMGRKISVDSASMMNKGLELIEACWLFDARPSQVEVVVHPQSVIHSLVDYVDGSVLAQLGNPDMRTPIANALAWPERIDSGVAPLDLFAIARLDFQAPDEQRFPCLRLARQAAEAGNSAPAMLNAANEVAVSAFLERRIRYPEIASIIDEVLTREPVVAVNELDAVFAADARARVLAQQWLQRNGR.

Thr13, Gly14, Ser15, Ile16, and Asn127 together coordinate NADPH. 1-deoxy-D-xylulose 5-phosphate is bound at residue Lys128. Glu129 lines the NADPH pocket. A Mn(2+)-binding site is contributed by Asp153. 4 residues coordinate 1-deoxy-D-xylulose 5-phosphate: Ser154, Glu155, Ser184, and His207. Glu155 is a binding site for Mn(2+). Gly213 serves as a coordination point for NADPH. Residues Ser220, Asn225, Lys226, and Glu229 each coordinate 1-deoxy-D-xylulose 5-phosphate. Glu229 contacts Mn(2+).

The protein belongs to the DXR family. Mg(2+) serves as cofactor. The cofactor is Mn(2+).

The catalysed reaction is 2-C-methyl-D-erythritol 4-phosphate + NADP(+) = 1-deoxy-D-xylulose 5-phosphate + NADPH + H(+). Its pathway is isoprenoid biosynthesis; isopentenyl diphosphate biosynthesis via DXP pathway; isopentenyl diphosphate from 1-deoxy-D-xylulose 5-phosphate: step 1/6. In terms of biological role, catalyzes the NADPH-dependent rearrangement and reduction of 1-deoxy-D-xylulose-5-phosphate (DXP) to 2-C-methyl-D-erythritol 4-phosphate (MEP). The polypeptide is 1-deoxy-D-xylulose 5-phosphate reductoisomerase (Pseudomonas fluorescens (strain ATCC BAA-477 / NRRL B-23932 / Pf-5)).